The primary structure comprises 714 residues: Rho-GTPase-activating protein RGD2 (714 aa).

The region spanning 2–441 (LSFCDYFWSE…LENDIDPTAD (440 aa)) is the F-BAR domain. A DEP domain is found at 218–298 (PKTDYKLPLI…WKNTAYMFAN (81 aa)). The Rho-GAP domain maps to 475 to 704 (VDLETRCRLD…DLLTHKKQIF (230 aa)).

Interacts with CDC42 and RHO5.

Acts in signal transduction. Activates CDC42 and RHO5. The chain is Rho-GTPase-activating protein RGD2 (RGD2) from Saccharomyces cerevisiae (strain ATCC 204508 / S288c) (Baker's yeast).